A 574-amino-acid chain; its full sequence is M-phase inducer phosphatase 2 (574 aa).

Disordered regions lie at residues 31–51 and 90–110; these read GFGF…SSSP and RRTS…AGLC. A Phosphoserine modification is found at Ser-42. Over residues 90-105 the composition is skewed to low complexity; the sequence is RRTSECSLSSESSESS. A Phosphoserine; by MELK modification is found at Ser-166. Ser-246 bears the Phosphoserine mark. The residue at position 319 (Ser-319) is a Phosphoserine; by MAPKAPK2 and MELK. Ser-319 is subject to Phosphoserine; by MELK and MAPK14. A disordered region spans residues 339–359; it reads DVPVLSKRRKSGTPLEEQQLE. Ser-349 is modified (phosphoserine; by AURKA). A Phosphoserine; by BRSK1 and MAPK14 modification is found at Ser-370. The Rhodanese domain occupies 425–532; the sequence is IVEKFVIVDC…FFPQHPNFCE (108 aa). Cys-481 is an active-site residue. A Phosphoserine modification is found at Ser-557.

It belongs to the MPI phosphatase family. As to quaternary structure, interacts with MAPK14 and 14-3-3 proteins. Post-translationally, phosphorylated by BRSK1 in vitro. Phosphorylated by CHEK1, which inhibits the activity of this protein. Phosphorylation at Ser-349 by AURKA might locally participate in the control of the onset of mitosis. Phosphorylation by MELK at Ser-166 promotes localization to the centrosome and the spindle poles during mitosis. Phosphorylation at Ser-319 and Ser-370 by MAPK14 is required for binding to 14-3-3 proteins.

The protein resides in the cytoplasm. The protein localises to the cytoskeleton. It is found in the microtubule organizing center. Its subcellular location is the centrosome. It localises to the spindle pole. The catalysed reaction is O-phospho-L-tyrosyl-[protein] + H2O = L-tyrosyl-[protein] + phosphate. Stimulated by B-type cyclins. Its function is as follows. Tyrosine protein phosphatase which functions as a dosage-dependent inducer of mitotic progression. Directly dephosphorylates CDK1 and stimulates its kinase activity. Required for G2/M phases of the cell cycle progression and abscission during cytokinesis in a ECT2-dependent manner. The three isoforms seem to have a different level of activity. This Rattus norvegicus (Rat) protein is M-phase inducer phosphatase 2 (Cdc25b).